A 313-amino-acid chain; its full sequence is MSVIDTNQIDLVAPRISEAGVADYIALLKPRVMSLVVFTALVGMLLAPGDFHPVLAITAMLCIAVGGGAAGALNMWYEDDIDGQMTRTANRPIPRGRVTRPEALTFGITLSFFSVMTLGILVNWVAGALLAFTIFFYVVIYTMWLKRSTAQNIVIGGAAGALPPVVAWAAVTGSLAVEPLLLFAIIFFWTPPHFWALALFRNDDYARAGVPMLPVVAGQDHTRLQILLYTIVLVAVAAAPWPLGYFSAIYGVASLALGGWMLVLALRVYRHRTGSAALRATRNLFKFSILYLFALFSILLLEVVAKAVWRLFA.

8 helical membrane passes run 32 to 52, 53 to 73, 120 to 140, 153 to 173, 180 to 200, 226 to 246, 248 to 268, and 284 to 304; these read VMSL…GDFH, PVLA…AGAL, ILVN…YVVI, IVIG…AVTG, LLLF…LALF, ILLY…LGYF, AIYG…ALRV, and LFKF…LEVV.

The protein belongs to the UbiA prenyltransferase family. Protoheme IX farnesyltransferase subfamily.

The protein resides in the cell inner membrane. The enzyme catalyses heme b + (2E,6E)-farnesyl diphosphate + H2O = Fe(II)-heme o + diphosphate. It functions in the pathway porphyrin-containing compound metabolism; heme O biosynthesis; heme O from protoheme: step 1/1. Functionally, converts heme B (protoheme IX) to heme O by substitution of the vinyl group on carbon 2 of heme B porphyrin ring with a hydroxyethyl farnesyl side group. This chain is Protoheme IX farnesyltransferase, found in Rhodopseudomonas palustris (strain HaA2).